We begin with the raw amino-acid sequence, 272 residues long: Alkaline ceramidase (272 aa).

Helical transmembrane passes span 34–54 and 61–81; these read FANT…IMLL and VNGG…ASTY. Histidine 83 lines the Zn(2+) pocket. 4 helical membrane-spanning segments follow: residues 96 to 116, 124 to 144, 148 to 168, and 183 to 203; these read LSLV…MKWF, LTVV…LCFL, LNAI…RYEG, and ILAL…LCDF. Residues histidine 213 and histidine 217 each coordinate Zn(2+). A helical membrane pass occupies residues 214–234; that stretch reads ALFHLLAGLAGYTIFIMFSMI. Asparagine 256 carries an N-linked (GlcNAc...) asparagine glycan.

This sequence belongs to the alkaline ceramidase family. Zn(2+) is required as a cofactor.

It is found in the membrane. It catalyses the reaction an N-acylsphing-4-enine + H2O = sphing-4-enine + a fatty acid. Hydrolyzes the sphingolipid ceramide into sphingosine and free fatty acid. The protein is Alkaline ceramidase of Caenorhabditis briggsae.